Here is a 229-residue protein sequence, read N- to C-terminus: UPF0173 metal-dependent hydrolase SAOUHSC_01815 (229 aa).

It belongs to the UPF0173 family.

The sequence is that of UPF0173 metal-dependent hydrolase SAOUHSC_01815 from Staphylococcus aureus (strain NCTC 8325 / PS 47).